A 933-amino-acid polypeptide reads, in one-letter code: MSMSSRHLHSSIVNPPPPEYINRKKTGRLTNQLQYLEKVVLKALWRHHFSWPFQQPVDAAKLNLPDYYQIIKNPMDLSTIRKRLEYNYYSKALDCIQDFNTMFTNCYIYNKPGDDIVVMSQELEKVFMEKIAEMPHEEIELSVVGNRGVKSRIKISAVAAEVCKKKMVSQKMHRRTFPCPVIAMMPKRTTLVPLSVIRSSTSSHSASSVSKVNKGIKRKADTTTPAVSLIATSCESSPTLSEPKPNKILSGTEKTRSAETSAVDLPDSQHHIHFIKSNQICEQLKHCNNILNEMMSKKHAEYAWPFYKTVIPTSLLDCSDAIKHPMDLATIRDKMENGLYKDTQDFASDVRLMFMNSYKYNPPDNEVVNMARKMQDVFEGMFAKIPDDPLATQSMVERYKTSTEESSSSSSSEQSSSSDSEDERAQHLALLQEQLRAVQEQLKALTETPIFSKIQPKSAVGVYDKYKQWVKCIEPMGKLLKRKKNYDAKKKKLHVSDEEEDVKPMSYDEKRQLSLDINKLPGEKLGRIVHIIQSREPSLKDSNPNEIEIDFETLKQSTLRHLEKYVMVCLRKRPKKPSSIKSLKSKEQLNKEKKQELEKRLRDVSGQLSSAKKPKIQGFLYPMQSIGGPSRLSESSTSSSASDVSNSSDSSSSDSSDSESATFPKNILAKKQTSTNYEVPLLLYYGCFVNKPRTSIPQNGLCIGSQSLAYTTISTIVHPTPMALMPLHPGSTNYTSLQLLLKYGLHVPLIIENPLGNSVLFENYLEVLHPSQIEQTFAIKEECLKPKYKNAKVKTSFCWEVFSKSLATTHVTIKSSSNSFQQFRKAAIAKEERERALKAQELRRLEDSKAGMQEKLSPSLPMETKVHEMQAQTIDEATKGEPTCNPVHEGITEEERNLARMREQERRRREAMAGTIDMYLQSDIMATFEEHLC.

Positions 1-21 (MSMSSRHLHSSIVNPPPPEYI) are disordered. Residues 28–134 (RLTNQLQYLE…KVFMEKIAEM (107 aa)) enclose the Bromo 1 domain. The Nuclear localization signal signature appears at 214-225 (KGIKRKADTTTP). Residues 235 to 263 (ESSPTLSEPKPNKILSGTEKTRSAETSAV) form a disordered region. In terms of domain architecture, Bromo 2 spans 278–385 (NQICEQLKHC…DVFEGMFAKI (108 aa)). Disordered stretches follow at residues 398–425 (RYKT…DERA), 576–610 (KPSS…QLSS), and 627–662 (GGPS…ESAT). Positions 404-418 (EESSSSSSSEQSSSS) are enriched in low complexity. Residues 423-448 (ERAQHLALLQEQLRAVQEQLKALTET) are a coiled coil. In terms of domain architecture, NET spans 495 to 577 (VSDEEEDVKP…VCLRKRPKKP (83 aa)). Basic and acidic residues predominate over residues 584-603 (KSKEQLNKEKKQELEKRLRD). Low complexity predominate over residues 630 to 660 (SRLSESSTSSSASDVSNSSDSSSSDSSDSES). A coiled-coil region spans residues 829–917 (AKEERERALK…RREAMAGTID (89 aa)).

Belongs to the BET family.

It is found in the nucleus. In terms of biological role, testis-specific chromatin protein that specifically binds histone H4 acetylated at 'Lys-5' and 'Lys-8' (H4K5ac and H4K8ac, respectively) and plays a key role in spermatogenesis. Required in late pachytene spermatocytes: plays a role in meiotic and post-meiotic cells by binding to acetylated histones at the promoter of specific meiotic and post-meiotic genes, facilitating their activation at the appropriate time. In the post-meiotic phase of spermatogenesis, binds to hyperacetylated histones and participates in their general removal from DNA. Also recognizes and binds a subset of butyrylated histones: able to bind histone H4 butyrylated at 'Lys-8' (H4K8ac), while it is not able to bind H4 butyrylated at 'Lys-5' (H4K5ac). This is Bromodomain testis-specific protein (brdt) from Xenopus tropicalis (Western clawed frog).